We begin with the raw amino-acid sequence, 334 residues long: Glycerol-3-phosphate dehydrogenase [NAD(P)+] (334 aa).

Residues S14, Y15, H35, and K109 each contribute to the NADPH site. 3 residues coordinate sn-glycerol 3-phosphate: K109, G138, and T140. A142 provides a ligand contact to NADPH. K194, D247, S257, R258, and N259 together coordinate sn-glycerol 3-phosphate. The active-site Proton acceptor is K194. Position 258 (R258) interacts with NADPH. Positions 282 and 284 each coordinate NADPH.

It belongs to the NAD-dependent glycerol-3-phosphate dehydrogenase family.

The protein localises to the cytoplasm. It carries out the reaction sn-glycerol 3-phosphate + NAD(+) = dihydroxyacetone phosphate + NADH + H(+). It catalyses the reaction sn-glycerol 3-phosphate + NADP(+) = dihydroxyacetone phosphate + NADPH + H(+). The protein operates within membrane lipid metabolism; glycerophospholipid metabolism. Its function is as follows. Catalyzes the reduction of the glycolytic intermediate dihydroxyacetone phosphate (DHAP) to sn-glycerol 3-phosphate (G3P), the key precursor for phospholipid synthesis. The sequence is that of Glycerol-3-phosphate dehydrogenase [NAD(P)+] from Aeromonas hydrophila subsp. hydrophila (strain ATCC 7966 / DSM 30187 / BCRC 13018 / CCUG 14551 / JCM 1027 / KCTC 2358 / NCIMB 9240 / NCTC 8049).